The primary structure comprises 236 residues: ATP synthase subunit a, chloroplastic (236 aa).

Transmembrane regions (helical) follow at residues 25-45 (MHGQVLINSWIVLGLIIAFAV), 87-107 (FIGTLFLFIFVSNWSGALIPW), 123-143 (DINTTVALALLTSLTYFYAGL), 180-202 (LFGNILADELVVAVLVSLVPLVI), and 210-230 (GLFTSGIQALIFATLAGAYIG).

It belongs to the ATPase A chain family. F-type ATPases have 2 components, CF(1) - the catalytic core - and CF(0) - the membrane proton channel. CF(1) has five subunits: alpha(3), beta(3), gamma(1), delta(1), epsilon(1). CF(0) has four main subunits: a, b, b' and c.

The protein localises to the plastid. The protein resides in the chloroplast thylakoid membrane. Functionally, key component of the proton channel; it plays a direct role in the translocation of protons across the membrane. This is ATP synthase subunit a, chloroplastic from Ostreococcus tauri.